We begin with the raw amino-acid sequence, 223 residues long: GTP cyclohydrolase 1 (223 aa).

Zn(2+)-binding residues include Cys-111, His-114, and Cys-182.

It belongs to the GTP cyclohydrolase I family. Homomer.

It carries out the reaction GTP + H2O = 7,8-dihydroneopterin 3'-triphosphate + formate + H(+). It participates in cofactor biosynthesis; 7,8-dihydroneopterin triphosphate biosynthesis; 7,8-dihydroneopterin triphosphate from GTP: step 1/1. This is GTP cyclohydrolase 1 from Flavobacterium johnsoniae (strain ATCC 17061 / DSM 2064 / JCM 8514 / BCRC 14874 / CCUG 350202 / NBRC 14942 / NCIMB 11054 / UW101) (Cytophaga johnsonae).